The chain runs to 322 residues: Homoserine kinase (322 aa).

An ATP-binding site is contributed by 106-116 (ALSSGMGGSAA).

It belongs to the GHMP kinase family. Homoserine kinase subfamily.

The protein localises to the cytoplasm. The enzyme catalyses L-homoserine + ATP = O-phospho-L-homoserine + ADP + H(+). The protein operates within amino-acid biosynthesis; L-threonine biosynthesis; L-threonine from L-aspartate: step 4/5. Catalyzes the ATP-dependent phosphorylation of L-homoserine to L-homoserine phosphate. In Xanthomonas campestris pv. campestris (strain B100), this protein is Homoserine kinase.